The sequence spans 188 residues: dCTP deaminase (188 aa).

DCTP-binding positions include K111–R116, T135–E137, Q156, Y170, and Q180. The Proton donor/acceptor role is filled by E137.

It belongs to the dCTP deaminase family. Homotrimer.

The enzyme catalyses dCTP + H2O + H(+) = dUTP + NH4(+). It functions in the pathway pyrimidine metabolism; dUMP biosynthesis; dUMP from dCTP (dUTP route): step 1/2. Functionally, catalyzes the deamination of dCTP to dUTP. This Azoarcus sp. (strain BH72) protein is dCTP deaminase.